The chain runs to 747 residues: Catalase-peroxidase (747 aa).

Positions 1 to 27 (MRKFSVSKVALLAATMAPALLPAAARA) are cleaved as a signal peptide. Positions 116 to 238 (WHSAGTYRTA…LAAVQMGLIY (123 aa)) form a cross-link, tryptophyl-tyrosyl-methioninium (Trp-Tyr) (with M-264). His-117 acts as the Proton acceptor in catalysis. The segment at residues 238–264 (YVNPEGPNGNPDPLLAAKDIRETFGRM) is a cross-link (tryptophyl-tyrosyl-methioninium (Tyr-Met) (with W-116)). A heme b-binding site is contributed by His-279.

Belongs to the peroxidase family. Peroxidase/catalase subfamily. In terms of assembly, homodimer or homotetramer. Heme b is required as a cofactor. Post-translationally, formation of the three residue Trp-Tyr-Met cross-link is important for the catalase, but not the peroxidase activity of the enzyme.

It carries out the reaction H2O2 + AH2 = A + 2 H2O. The enzyme catalyses 2 H2O2 = O2 + 2 H2O. Functionally, bifunctional enzyme with both catalase and broad-spectrum peroxidase activity. The protein is Catalase-peroxidase of Novosphingobium aromaticivorans (strain ATCC 700278 / DSM 12444 / CCUG 56034 / CIP 105152 / NBRC 16084 / F199).